The sequence spans 98 residues: DNA/RNA-binding protein Alba (98 aa).

Lys16 carries the N6-acetyllysine modification.

It belongs to the histone-like Alba family. In terms of processing, acetylated. Acetylation at Lys-16 decreases DNA-binding affinity.

It localises to the cytoplasm. Its subcellular location is the chromosome. Functionally, binds double-stranded DNA tightly but without sequence specificity. Involved in DNA compaction. The chain is DNA/RNA-binding protein Alba from Metallosphaera sedula (strain ATCC 51363 / DSM 5348 / JCM 9185 / NBRC 15509 / TH2).